Here is a 452-residue protein sequence, read N- to C-terminus: Eukaryotic translation initiation factor 4B3 (452 aa).

Alanine 2 is subject to N-acetylalanine. The interval 20–282 (EEHEAELKQQ…PSGGSRPRLV (263 aa)) is disordered. Residues 28–37 (QQPSPTNQKS) show a composition bias toward polar residues. Positions 98–110 (PRERSAEELDRSK) are enriched in basic and acidic residues. A compositionally biased stretch (gly residues) spans 111–122 (LGGGFRSYGGGR). Residues 126–136 (ESSSSRWGSSR) are compositionally biased toward low complexity. Residues 137-156 (VSEDGERRGGGFNRDREPSR) show a composition bias toward basic and acidic residues. Short sequence motifs (nuclear localization signal) lie at residues 172–179 (AKKPISGN) and 215–222 (PRRFVSSN). A compositionally biased stretch (basic and acidic residues) spans 227–243 (DRFEKRGSFESLSRNRD). Residues serine 234, serine 270, and serine 300 each carry the phosphoserine modification. Positions 265-280 (GAANGSPPPSGGSRPR) are enriched in low complexity. Residues 349–452 (AAMEKPNEKS…AKKEETEDKI (104 aa)) form a disordered region. Residues 369–386 (GRKDEERIERSWRKSTEH) show a composition bias toward basic and acidic residues. A compositionally biased stretch (acidic residues) spans 387 to 397 (SEEDAQEEEPA). 2 stretches are compositionally biased toward basic and acidic residues: residues 400–419 (GAKK…KKEE) and 441–452 (EEAKKEETEDKI).

It belongs to the eIF-4 subunit B family. In terms of assembly, homodimer. Nonspherical monomer. mRNA-discriminating component of initiation complexes. Interacts with MAD2. Post-translationally, phosphorylated.

The protein localises to the nucleus. Its function is as follows. Promotes the eIF4F and eIF4A RNA-dependent ATP-hydrolysis activity with different efficiency depending on mRNAs, thus providing mRNA discrimination during initiation of translation. In Arabidopsis thaliana (Mouse-ear cress), this protein is Eukaryotic translation initiation factor 4B3.